The primary structure comprises 465 residues: ATP-dependent RNA helicase ddx19 (465 aa).

Residues M1–E20 show a composition bias toward basic and acidic residues. The tract at residues M1 to S45 is disordered. Residues Q21–Q34 are compositionally biased toward low complexity. The short motif at K70–E98 is the Q motif element. The Helicase ATP-binding domain occupies P102 to S268. ATP is bound at residue S115–T122. Positions D215–D218 match the DEAD box motif. One can recognise a Helicase C-terminal domain in the interval I297–L449.

This sequence belongs to the DEAD box helicase family. DDX19/DBP5 subfamily.

The enzyme catalyses ATP + H2O = ADP + phosphate + H(+). In terms of biological role, ATP-binding RNA helicase required for normal differentiation and development. This chain is ATP-dependent RNA helicase ddx19 (helC), found in Dictyostelium discoideum (Social amoeba).